Here is a 300-residue protein sequence, read N- to C-terminus: MTDQKTYCGFIAIVGRPNVGKSTLLNKILGQKISITSRKAQTTRHRILGIKTEGAYQEIYVDTPGLHIEEKRAINRLMNRAAASAIGDVDMVIFVVEGTKWTDDDEMVLNKLRSTKAPVILAINKVDNIKEKEELLPHLTALSQKFPFKEIIPISAQRGKNVHILEKFVRESLKEGIHHYPEDYVTDRSQRFMASEIIREKLMRFMGEELPYSVTVEIEQFKTNERGTYEINGLILVEREGQKKMVIGNKGQKIKVIGTEARADMERLFDNKVHLELWVKVKAGWADDERALRSLGYIDE.

Residues 7–175 enclose the Era-type G domain; sequence YCGFIAIVGR…EKFVRESLKE (169 aa). The G1 stretch occupies residues 15-22; it reads GRPNVGKS. 15-22 serves as a coordination point for GTP; that stretch reads GRPNVGKS. Residues 41-45 are G2; it reads QTTRH. Positions 62–65 are G3; it reads DTPG. Residues 62–66 and 124–127 each bind GTP; these read DTPGL and NKVD. Residues 124–127 form a G4 region; sequence NKVD. Positions 154-156 are G5; that stretch reads ISA. The 78-residue stretch at 206-283 folds into the KH type-2 domain; sequence MGEELPYSVT…HLELWVKVKA (78 aa).

It belongs to the TRAFAC class TrmE-Era-EngA-EngB-Septin-like GTPase superfamily. Era GTPase family. As to quaternary structure, monomer.

It is found in the cytoplasm. The protein localises to the cell inner membrane. Its function is as follows. An essential GTPase that binds both GDP and GTP, with rapid nucleotide exchange. Plays a role in 16S rRNA processing and 30S ribosomal subunit biogenesis and possibly also in cell cycle regulation and energy metabolism. The polypeptide is GTPase Era (Glaesserella parasuis serovar 5 (strain SH0165) (Haemophilus parasuis)).